The following is a 462-amino-acid chain: Siroheme synthase (462 aa).

The tract at residues Met-1–Leu-201 is precorrin-2 dehydrogenase /sirohydrochlorin ferrochelatase. Residues Glu-22–Val-23 and Pro-43–Glu-44 each bind NAD(+). Ser-126 bears the Phosphoserine mark. The tract at residues Gly-214–Leu-462 is uroporphyrinogen-III C-methyltransferase. Pro-223 lines the S-adenosyl-L-methionine pocket. Asp-246 functions as the Proton acceptor in the catalytic mechanism. Catalysis depends on Lys-268, which acts as the Proton donor. Residues Gly-299–Asp-301, Ile-304, Thr-329–Ala-330, Met-381, and Gly-410 each bind S-adenosyl-L-methionine.

It in the N-terminal section; belongs to the precorrin-2 dehydrogenase / sirohydrochlorin ferrochelatase family. In the C-terminal section; belongs to the precorrin methyltransferase family.

The catalysed reaction is uroporphyrinogen III + 2 S-adenosyl-L-methionine = precorrin-2 + 2 S-adenosyl-L-homocysteine + H(+). It carries out the reaction precorrin-2 + NAD(+) = sirohydrochlorin + NADH + 2 H(+). It catalyses the reaction siroheme + 2 H(+) = sirohydrochlorin + Fe(2+). It participates in cofactor biosynthesis; adenosylcobalamin biosynthesis; precorrin-2 from uroporphyrinogen III: step 1/1. The protein operates within cofactor biosynthesis; adenosylcobalamin biosynthesis; sirohydrochlorin from precorrin-2: step 1/1. It functions in the pathway porphyrin-containing compound metabolism; siroheme biosynthesis; precorrin-2 from uroporphyrinogen III: step 1/1. Its pathway is porphyrin-containing compound metabolism; siroheme biosynthesis; siroheme from sirohydrochlorin: step 1/1. It participates in porphyrin-containing compound metabolism; siroheme biosynthesis; sirohydrochlorin from precorrin-2: step 1/1. In terms of biological role, multifunctional enzyme that catalyzes the SAM-dependent methylations of uroporphyrinogen III at position C-2 and C-7 to form precorrin-2 via precorrin-1. Then it catalyzes the NAD-dependent ring dehydrogenation of precorrin-2 to yield sirohydrochlorin. Finally, it catalyzes the ferrochelation of sirohydrochlorin to yield siroheme. This Ectopseudomonas mendocina (strain ymp) (Pseudomonas mendocina) protein is Siroheme synthase.